The sequence spans 316 residues: Transaldolase 2 (316 aa).

The Schiff-base intermediate with substrate role is filled by Lys131.

It belongs to the transaldolase family. Type 1 subfamily. In terms of assembly, homodimer.

The protein localises to the cytoplasm. The catalysed reaction is D-sedoheptulose 7-phosphate + D-glyceraldehyde 3-phosphate = D-erythrose 4-phosphate + beta-D-fructose 6-phosphate. It functions in the pathway carbohydrate degradation; pentose phosphate pathway; D-glyceraldehyde 3-phosphate and beta-D-fructose 6-phosphate from D-ribose 5-phosphate and D-xylulose 5-phosphate (non-oxidative stage): step 2/3. Functionally, transaldolase is important for the balance of metabolites in the pentose-phosphate pathway. The polypeptide is Transaldolase 2 (Shigella sonnei (strain Ss046)).